A 79-amino-acid chain; its full sequence is Exodeoxyribonuclease 7 small subunit (79 aa).

Belongs to the XseB family. As to quaternary structure, heterooligomer composed of large and small subunits.

Its subcellular location is the cytoplasm. It catalyses the reaction Exonucleolytic cleavage in either 5'- to 3'- or 3'- to 5'-direction to yield nucleoside 5'-phosphates.. Bidirectionally degrades single-stranded DNA into large acid-insoluble oligonucleotides, which are then degraded further into small acid-soluble oligonucleotides. The chain is Exodeoxyribonuclease 7 small subunit from Haemophilus influenzae (strain PittGG).